We begin with the raw amino-acid sequence, 1106 residues long: MVYTALTWQRLHGTAAGLVPSHLPQEGEKGSTHPTPRPLGTTPRVTAHIEPPRPWAAGAEPPLPAGDGSARESSPFIGSAAADGDSLLEGKNMALFEEEMDSNPMVSSLLNKLANYTNLSQGVVDHEEAEDSRPRESKAPCMGTFIGVYLPCLQNILGVILFLRLTWIVGAAGVLESFLVVSMCCTCTMLTAVSMSAIATNGVVPAGGSYYMISRSLGPEFGGAVGLCFYLGTTFAGAMYILGTIEIFLTYISPGAAVFQAETPEGEAAALLHNMRVYGSCTLALMAVVVFVGVKYVNKLALVFLACVVLSILAIYAGVIKTAFDPPDIPVCLLGNRTLARRGFDTCAKVRAVSNGTATTALWGLFCNGSSLDTACNEYFAQNNVTEIQGIPGVASGVLLDNLWSAYSDRGAFVEKKGVASVPTPEDGRASGLPYVLSDITTYFTVLVGIYFPSVTGIMAGSNRSGDLKDAQKSIPTGTILAIVTTSFIYLSCIVLFGACIEGVVLRDKFGEALQGNLVIGMLAWPSPWVIVIGSFFSTCGAGLQSLTGAPRLLQAIARDGIVPFLQVFGHGKANGEPTWALLLTALICETGILIASLDSVAPILSMFFLMCYMFVNLACAVQTLLRTPNWRPRFKYYHWTLSFLGMSLCLALMFICSWYYALFAMLIAGCIYKYIEYRGAEKEWGDGIRGLSLNAARYALLRVEHGPPHTKNWRPQVLVMLTLDAEQRVTHPRLLSFTSQLKAGKGLTIVGSVLEGTFLDKHVEAQRAEENIRALMGAEKMKGFCQLVVSSSLRDGCSHLIQAAGLGGMKHNTVLMAWPEAWKQPDSPYSWKYFVDTVRDTTAAQQALLVAKNIDAFPQNQERFSEGSIDVWWVVHDGGMLMLLPFLLRQHKVWRKCRMRIFTVAQVDDNSVQMKKDLQMFLYHLRISAEVEVVEMVENDISAFTYEKTLLMEQRSQMLKQMQLTKGEREREAQLIHDRNTASHTAASRAQAPPTPDKVQMTWTKEKLTAEKHRNKDAGAAGFRDLFSLKPDHSNVRRMHTAVKLNGVVLSRSQDAQLVLLNMPGPPKNRQGDENYMEFLEVLTEGLNRVVLVRGGGREVITIYS.

Over 1–143 (MVYTALTWQR…PRESKAPCMG (143 aa)) the chain is Cytoplasmic. Residues 17 to 83 (GLVPSHLPQE…SPFIGSAAAD (67 aa)) are disordered. Phosphoserine occurs at positions 74 and 86. A discontinuously helical transmembrane segment spans residues 144-166 (TFIGVYLPCLQNILGVILFLRLT). The K(+) site is built by Asn-155 and Ile-156. Val-159 lines the chloride pocket. Residues 167–173 (WIVGAAG) lie on the Extracellular side of the membrane. A helical transmembrane segment spans residues 174 to 196 (VLESFLVVSMCCTCTMLTAVSMS). The Cytoplasmic portion of the chain corresponds to 197-220 (AIATNGVVPAGGSYYMISRSLGPE). A helical membrane pass occupies residues 221-249 (FGGAVGLCFYLGTTFAGAMYILGTIEIFL). The Extracellular portion of the chain corresponds to 250 to 273 (TYISPGAAVFQAETPEGEAAALLH). Transmembrane regions (helical) follow at residues 274-295 (NMRV…VGVK) and 296-324 (YVNK…KTAF). At 325–443 (DPPDIPVCLL…PYVLSDITTY (119 aa)) the chain is on the extracellular side. 3 N-linked (GlcNAc...) asparagine glycosylation sites follow: Asn-336, Asn-355, and Asn-384. The chain crosses the membrane as a helical span at residues 444–464 (FTVLVGIYFPSVTGIMAGSNR). K(+) is bound by residues Pro-453 and Thr-456. Residue Pro-453 coordinates chloride. Positions 457 and 458 each coordinate chloride. Residues 465–474 (SGDLKDAQKS) lie on the Cytoplasmic side of the membrane. Residues 475–497 (IPTGTILAIVTTSFIYLSCIVLF) traverse the membrane as a helical segment. Over 498-528 (GACIEGVVLRDKFGEALQGNLVIGMLAWPSP) the chain is Extracellular. Residues 529 to 555 (WVIVIGSFFSTCGAGLQSLTGAPRLLQ) traverse the membrane as a helical segment. The Cytoplasmic segment spans residues 556–578 (AIARDGIVPFLQVFGHGKANGEP). The next 2 helical transmembrane spans lie at 579–597 (TWAL…LIAS) and 598–622 (LDSV…ACAV). Tyr-613 is a chloride binding site. Residues 623–636 (QTLLRTPNWRPRFK) lie on the Cytoplasmic side of the membrane. 2 helical membrane passes run 637–659 (YYHW…ICSW) and 660–675 (YYAL…IYKY). The Cytoplasmic segment spans residues 676-1106 (IEYRGAEKEW…GGREVITIYS (431 aa)). Residues 688–704 (GIRGLSLNAARYALLRV) are scissor helix. The tract at residues 980 to 999 (RNTASHTAASRAQAPPTPDK) is disordered. 2 positions are modified to phosphothreonine: Thr-996 and Thr-1003.

It belongs to the SLC12A transporter family. K/Cl co-transporter subfamily. In terms of assembly, homodimer; adopts a domain-swap conformation at the scissor helices connecting the transmembrane domain and C-terminal domain. Heterodimer with K-Cl cotransporter SLC12A5. As to expression, widely expressed. Higher levels in heart, kidney and lung (at protein level).

The protein resides in the cell membrane. It carries out the reaction K(+)(in) + chloride(in) = K(+)(out) + chloride(out). Its activity is regulated as follows. Activated by N-ethylmaleimide (NEM). Inhibited by furosemide, DIDS and bumetanide. The inhibition is much stronger in the presence of 50 mM K(+) in the uptake medium. Inhibited by DIOA. Inhibited by WNK3. Mediates electroneutral potassium-chloride cotransport when activated by cell swelling. May mediate K(+) uptake into Deiters' cells in the cochlea and contribute to K(+) recycling in the inner ear. Important for the survival of cochlear outer and inner hair cells and the maintenance of the organ of Corti. May be required for basolateral Cl(-) extrusion in the kidney and contribute to renal acidification. The protein is Solute carrier family 12 member 7 of Oryctolagus cuniculus (Rabbit).